The following is a 631-amino-acid chain: Chaperone protein DnaK (631 aa).

Phosphothreonine; by autocatalysis is present on Thr175. Residues 586-631 (GAEGAAAGAGAAGAAGAGASAGSASGSDDDTVEAEVVDDDDDKDNK) are disordered. Over residues 602-611 (AGASAGSASG) the composition is skewed to low complexity. Residues 612-631 (SDDDTVEAEVVDDDDDKDNK) show a composition bias toward acidic residues.

It belongs to the heat shock protein 70 family.

Acts as a chaperone. The chain is Chaperone protein DnaK from Bifidobacterium longum subsp. infantis (strain ATCC 15697 / DSM 20088 / JCM 1222 / NCTC 11817 / S12).